Reading from the N-terminus, the 193-residue chain is Large ribosomal subunit protein eL19B (193 aa).

Residues 157–179 (EQQDARRARAKAARQRRAKAVEE) are disordered. The segment covering 164-174 (ARAKAARQRRA) has biased composition (basic residues).

Belongs to the eukaryotic ribosomal protein eL19 family. In terms of assembly, component of the large ribosomal subunit (LSU). Mature yeast ribosomes consist of a small (40S) and a large (60S) subunit. The 40S small subunit contains 1 molecule of ribosomal RNA (18S rRNA) and at least 33 different proteins. The large 60S subunit contains 3 rRNA molecules (25S, 5.8S and 5S rRNA) and at least 46 different proteins. eL19 lies in close proximity to the binding site for eukaryotic initiation factor eIF4G.

It is found in the cytoplasm. Component of the ribosome, a large ribonucleoprotein complex responsible for the synthesis of proteins in the cell. The small ribosomal subunit (SSU) binds messenger RNAs (mRNAs) and translates the encoded message by selecting cognate aminoacyl-transfer RNA (tRNA) molecules. The large subunit (LSU) contains the ribosomal catalytic site termed the peptidyl transferase center (PTC), which catalyzes the formation of peptide bonds, thereby polymerizing the amino acids delivered by tRNAs into a polypeptide chain. The nascent polypeptides leave the ribosome through a tunnel in the LSU and interact with protein factors that function in enzymatic processing, targeting, and the membrane insertion of nascent chains at the exit of the ribosomal tunnel. eL19 may play a role in the last stages of translation initiation, in particular subunit joining and shedding/releasing factors. The polypeptide is Large ribosomal subunit protein eL19B (rpl1902) (Schizosaccharomyces pombe (strain 972 / ATCC 24843) (Fission yeast)).